The sequence spans 605 residues: Elongation factor 4 (605 aa).

The tr-type G domain occupies 9–192 (GMIRNFCIIA…AIVQRIPAPA (184 aa)). GTP is bound by residues 21–26 (DHGKST) and 139–142 (NKID).

It belongs to the TRAFAC class translation factor GTPase superfamily. Classic translation factor GTPase family. LepA subfamily.

The protein resides in the cell inner membrane. The enzyme catalyses GTP + H2O = GDP + phosphate + H(+). Required for accurate and efficient protein synthesis under certain stress conditions. May act as a fidelity factor of the translation reaction, by catalyzing a one-codon backward translocation of tRNAs on improperly translocated ribosomes. Back-translocation proceeds from a post-translocation (POST) complex to a pre-translocation (PRE) complex, thus giving elongation factor G a second chance to translocate the tRNAs correctly. Binds to ribosomes in a GTP-dependent manner. The chain is Elongation factor 4 from Chlorobaculum parvum (strain DSM 263 / NCIMB 8327) (Chlorobium vibrioforme subsp. thiosulfatophilum).